The primary structure comprises 311 residues: 4-hydroxy-tetrahydrodipicolinate synthase (311 aa).

Threonine 49 lines the pyruvate pocket. Catalysis depends on tyrosine 138, which acts as the Proton donor/acceptor. The Schiff-base intermediate with substrate role is filled by lysine 166. Pyruvate is bound at residue valine 207.

This sequence belongs to the DapA family. In terms of assembly, homotetramer; dimer of dimers.

It is found in the cytoplasm. The enzyme catalyses L-aspartate 4-semialdehyde + pyruvate = (2S,4S)-4-hydroxy-2,3,4,5-tetrahydrodipicolinate + H2O + H(+). It functions in the pathway amino-acid biosynthesis; L-lysine biosynthesis via DAP pathway; (S)-tetrahydrodipicolinate from L-aspartate: step 3/4. Functionally, catalyzes the condensation of (S)-aspartate-beta-semialdehyde [(S)-ASA] and pyruvate to 4-hydroxy-tetrahydrodipicolinate (HTPA). The chain is 4-hydroxy-tetrahydrodipicolinate synthase from Lactobacillus helveticus (strain DPC 4571).